The sequence spans 95 residues: Aspartyl/glutamyl-tRNA(Asn/Gln) amidotransferase subunit C (95 aa).

Belongs to the GatC family. Heterotrimer of A, B and C subunits.

The enzyme catalyses L-glutamyl-tRNA(Gln) + L-glutamine + ATP + H2O = L-glutaminyl-tRNA(Gln) + L-glutamate + ADP + phosphate + H(+). It carries out the reaction L-aspartyl-tRNA(Asn) + L-glutamine + ATP + H2O = L-asparaginyl-tRNA(Asn) + L-glutamate + ADP + phosphate + 2 H(+). Its function is as follows. Allows the formation of correctly charged Asn-tRNA(Asn) or Gln-tRNA(Gln) through the transamidation of misacylated Asp-tRNA(Asn) or Glu-tRNA(Gln) in organisms which lack either or both of asparaginyl-tRNA or glutaminyl-tRNA synthetases. The reaction takes place in the presence of glutamine and ATP through an activated phospho-Asp-tRNA(Asn) or phospho-Glu-tRNA(Gln). The chain is Aspartyl/glutamyl-tRNA(Asn/Gln) amidotransferase subunit C from Geotalea uraniireducens (strain Rf4) (Geobacter uraniireducens).